Reading from the N-terminus, the 242-residue chain is Carboxy-S-adenosyl-L-methionine synthase (242 aa).

S-adenosyl-L-methionine is bound by residues Y39, G64–S66, D89–N90, D117–I118, N132, and R199.

Belongs to the class I-like SAM-binding methyltransferase superfamily. Cx-SAM synthase family. Homodimer.

It carries out the reaction prephenate + S-adenosyl-L-methionine = carboxy-S-adenosyl-L-methionine + 3-phenylpyruvate + H2O. Its function is as follows. Catalyzes the conversion of S-adenosyl-L-methionine (SAM) to carboxy-S-adenosyl-L-methionine (Cx-SAM). This chain is Carboxy-S-adenosyl-L-methionine synthase, found in Psychromonas ingrahamii (strain DSM 17664 / CCUG 51855 / 37).